Consider the following 144-residue polypeptide: Mercuric transport protein MerC (144 aa).

Topologically, residues 1–21 (MSAITRIIDKIGIVGTIVGSF) are cytoplasmic. Residues 22–42 (SCAMCFPAAASLGAAIGLGFL) traverse the membrane as a helical segment. 2 residues coordinate Hg(2+): Cys23 and Cys26. Topologically, residues 43 to 46 (SQWE) are periplasmic. Residues 47 to 67 (GLFVQWLIPIFASVALLATLA) form a helical membrane-spanning segment. Residues 68–78 (GWFSHRQWQRT) are Cytoplasmic-facing. Residues 79–99 (LLGSIGPVLALVGVFGLTHHF) traverse the membrane as a helical segment. The Periplasmic portion of the chain corresponds to 100 to 103 (LDKD). Residues 104–124 (LARVIFYTGLVVMFLVSIWDM) traverse the membrane as a helical segment. Topologically, residues 125–144 (VNPANRRCATDGCETPAPRS) are cytoplasmic.

As to quaternary structure, monomer.

Its subcellular location is the cell inner membrane. Inhibited by the thiol-modifying reagent N-ethylmaleimide (NEM). In terms of biological role, involved in mercuric ion uptake. The chain is Mercuric transport protein MerC from Acidithiobacillus ferrooxidans (Thiobacillus ferrooxidans).